Reading from the N-terminus, the 101-residue chain is Urease subunit beta (101 aa).

The protein belongs to the urease beta subunit family. In terms of assembly, heterotrimer of UreA (gamma), UreB (beta) and UreC (alpha) subunits. Three heterotrimers associate to form the active enzyme.

It is found in the cytoplasm. The enzyme catalyses urea + 2 H2O + H(+) = hydrogencarbonate + 2 NH4(+). It functions in the pathway nitrogen metabolism; urea degradation; CO(2) and NH(3) from urea (urease route): step 1/1. The polypeptide is Urease subunit beta (Albidiferax ferrireducens (strain ATCC BAA-621 / DSM 15236 / T118) (Rhodoferax ferrireducens)).